Here is a 371-residue protein sequence, read N- to C-terminus: Probable dual-specificity RNA methyltransferase RlmN (371 aa).

Residue Glu113 is the Proton acceptor of the active site. A Radical SAM core domain is found at 119–352; the sequence is QSWGNSVCVT…TTVRREMGGE (234 aa). Cys126 and Cys357 are disulfide-bonded. Positions 133, 137, and 140 each coordinate [4Fe-4S] cluster. Residues 182-183, Ser214, 237-239, and Asn313 contribute to the S-adenosyl-L-methionine site; these read GE and SLH. Catalysis depends on Cys357, which acts as the S-methylcysteine intermediate.

Belongs to the radical SAM superfamily. RlmN family. The cofactor is [4Fe-4S] cluster.

The protein resides in the cytoplasm. The catalysed reaction is adenosine(2503) in 23S rRNA + 2 reduced [2Fe-2S]-[ferredoxin] + 2 S-adenosyl-L-methionine = 2-methyladenosine(2503) in 23S rRNA + 5'-deoxyadenosine + L-methionine + 2 oxidized [2Fe-2S]-[ferredoxin] + S-adenosyl-L-homocysteine. It catalyses the reaction adenosine(37) in tRNA + 2 reduced [2Fe-2S]-[ferredoxin] + 2 S-adenosyl-L-methionine = 2-methyladenosine(37) in tRNA + 5'-deoxyadenosine + L-methionine + 2 oxidized [2Fe-2S]-[ferredoxin] + S-adenosyl-L-homocysteine. Functionally, specifically methylates position 2 of adenine 2503 in 23S rRNA and position 2 of adenine 37 in tRNAs. This is Probable dual-specificity RNA methyltransferase RlmN from Symbiobacterium thermophilum (strain DSM 24528 / JCM 14929 / IAM 14863 / T).